Consider the following 192-residue polypeptide: Large ribosomal subunit protein bL9 (192 aa).

The disordered stretch occupies residues 173–192 (ALRPEDFFDPEADGLDENEA). A compositionally biased stretch (acidic residues) spans 179 to 192 (FFDPEADGLDENEA).

This sequence belongs to the bacterial ribosomal protein bL9 family.

Its function is as follows. Binds to the 23S rRNA. This chain is Large ribosomal subunit protein bL9, found in Rhizobium etli (strain ATCC 51251 / DSM 11541 / JCM 21823 / NBRC 15573 / CFN 42).